A 135-amino-acid chain; its full sequence is Fatty acid-binding protein 5 (135 aa).

N-acetylalanine is present on A2. Position 3 is a phosphoserine (S3). A Nuclear localization signal motif is present at residues 24–34 (KELGVGLALRK). C43 and R109 together coordinate N-eicosanoyl ethanolamine. C120 and C127 are disulfide-bonded. 129–131 (RVY) lines the (9Z,12Z)-octadecadienoate pocket. Y131 provides a ligand contact to N-eicosanoyl ethanolamine. A hexadecanoate-binding site is contributed by Y131. Residue Y131 is modified to Phosphotyrosine.

It belongs to the calycin superfamily. Fatty-acid binding protein (FABP) family. In terms of assembly, monomer.

The protein localises to the cytoplasm. The protein resides in the nucleus. Its subcellular location is the synapse. It is found in the postsynaptic density. It localises to the secreted. The catalysed reaction is hexadecanoate(out) = hexadecanoate(in). The enzyme catalyses (9Z,12Z)-octadecadienoate(out) = (9Z,12Z)-octadecadienoate(in). It catalyses the reaction (9Z)-octadecenoate(out) = (9Z)-octadecenoate(in). Its function is as follows. Intracellular carrier for long-chain fatty acids and related active lipids, such as endocannabinoids, that regulate the metabolism and actions of the ligands they bind. In addition to the cytosolic transport, selectively delivers specific fatty acids from the cytosol to the nucleus, wherein they activate nuclear receptors. Delivers retinoic acid to the nuclear receptor peroxisome proliferator-activated receptor delta; which promotes proliferation and survival. May also serve as a synaptic carrier of endocannabinoid at central synapses and thus controls retrograde endocannabinoid signaling. Modulates inflammation by regulating PTGES induction via NF-kappa-B activation, and prostaglandin E2 (PGE2) biosynthesis during inflammation. This is Fatty acid-binding protein 5 from Rattus norvegicus (Rat).